A 181-amino-acid polypeptide reads, in one-letter code: Oligoribonuclease (181 aa).

In terms of domain architecture, Exonuclease spans 8–171 (LIWVDLEMTG…DDIHDSIAEL (164 aa)). Residue Y129 is part of the active site.

Belongs to the oligoribonuclease family.

It localises to the cytoplasm. In terms of biological role, 3'-to-5' exoribonuclease specific for small oligoribonucleotides. In Photobacterium profundum (strain SS9), this protein is Oligoribonuclease.